We begin with the raw amino-acid sequence, 52 residues long: Metchnikowin (52 aa).

The signal sequence occupies residues 1 to 24 (MQLNLGAIFLALLGVMATATSVLA). Residues 25–26 (EP) constitute a propeptide that is removed on maturation. The tract at residues 28 to 52 (RHQGPIFDTRPSPFNPNQPRPGPIY) is disordered. The span at 40–52 (PFNPNQPRPGPIY) shows a compositional bias: pro residues.

Hemolymph (at protein level). Highest expression in fat body.

It is found in the secreted. Potent antifungal and antibacterial activity against Gram-positive bacteria. The chain is Metchnikowin (Mtk) from Drosophila melanogaster (Fruit fly).